The primary structure comprises 206 residues: Thymidylate kinase (206 aa).

10–17 (GNDGSGKS) lines the ATP pocket.

This sequence belongs to the thymidylate kinase family.

It carries out the reaction dTMP + ATP = dTDP + ADP. Its function is as follows. Phosphorylation of dTMP to form dTDP in both de novo and salvage pathways of dTTP synthesis. This Caldicellulosiruptor saccharolyticus (strain ATCC 43494 / DSM 8903 / Tp8T 6331) protein is Thymidylate kinase.